The primary structure comprises 345 residues: Biotin synthase (345 aa).

The 229-residue stretch at 67–295 (YKVQLASLLS…KSRIRLSAGR (229 aa)) folds into the Radical SAM core domain. [4Fe-4S] cluster-binding residues include cysteine 82, cysteine 86, and cysteine 89. Residues cysteine 126, cysteine 158, cysteine 218, and arginine 290 each coordinate [2Fe-2S] cluster.

It belongs to the radical SAM superfamily. Biotin synthase family. As to quaternary structure, homodimer. [4Fe-4S] cluster is required as a cofactor. [2Fe-2S] cluster serves as cofactor.

The catalysed reaction is (4R,5S)-dethiobiotin + (sulfur carrier)-SH + 2 reduced [2Fe-2S]-[ferredoxin] + 2 S-adenosyl-L-methionine = (sulfur carrier)-H + biotin + 2 5'-deoxyadenosine + 2 L-methionine + 2 oxidized [2Fe-2S]-[ferredoxin]. It participates in cofactor biosynthesis; biotin biosynthesis; biotin from 7,8-diaminononanoate: step 2/2. Catalyzes the conversion of dethiobiotin (DTB) to biotin by the insertion of a sulfur atom into dethiobiotin via a radical-based mechanism. The chain is Biotin synthase from Prochlorococcus marinus (strain NATL2A).